We begin with the raw amino-acid sequence, 654 residues long: Probable Xaa-Pro aminopeptidase P (654 aa).

Residues Asp449, Asp460, Glu558, and Glu572 each contribute to the Mn(2+) site.

The protein belongs to the peptidase M24B family. Requires Mn(2+) as cofactor.

It carries out the reaction Release of any N-terminal amino acid, including proline, that is linked to proline, even from a dipeptide or tripeptide.. Its function is as follows. Catalyzes the removal of a penultimate prolyl residue from the N-termini of peptides. The sequence is that of Probable Xaa-Pro aminopeptidase P (ampp) from Aspergillus flavus (strain ATCC 200026 / FGSC A1120 / IAM 13836 / NRRL 3357 / JCM 12722 / SRRC 167).